Consider the following 249-residue polypeptide: Small ribosomal subunit protein uS2 (249 aa).

This sequence belongs to the universal ribosomal protein uS2 family.

In Bordetella parapertussis (strain 12822 / ATCC BAA-587 / NCTC 13253), this protein is Small ribosomal subunit protein uS2.